We begin with the raw amino-acid sequence, 594 residues long: Estrogen receptor (594 aa).

The interval 1–184 (MTMTLHTKAS…AMESAKETRY (184 aa)) is modulating (transactivation AF-1); mediates interaction with MACROD1. An O-linked (GlcNAc) serine glycan is attached at serine 10. Residues 35-47 (LERPLGEVYVESS) form a required for interaction with NCOA1 region. The interval 35-174 (LERPLGEVYV…LASSGDKGSM (140 aa)) is interaction with DDX5; self-association. Residues serine 104 and serine 106 each carry the phosphoserine; by CDK2 modification. Phosphoserine is present on serine 118. The disordered stretch occupies residues 152 to 173 (PNADNRRQGGRERLASSGDKGS). A compositionally biased stretch (basic and acidic residues) spans 154-165 (ADNRRQGGRERL). Serine 167 carries the post-translational modification Phosphoserine; by CK2. 2 consecutive NR C4-type zinc fingers follow at residues 185–205 (CAVCNDYASGYHYGVWSCEGC) and 221–245 (CPATNQCTIDKNRRKSCQACRLRKC). The nuclear receptor DNA-binding region spans 185–250 (CAVCNDYASG…RLRKCYEVGM (66 aa)). Positions 185–310 (CAVCNDYASG…TKKISPVLSL (126 aa)) are mediates interaction with DNTTIP2. The tract at residues 251–310 (MKGGIRKDRRGGRMLKHKRQRDDGEGRNEAGPSGDRRPANFWPSPLLIKHTKKISPVLSL) is hinge. A compositionally biased stretch (basic residues) spans 257 to 269 (KDRRGGRMLKHKR). The interval 257 to 293 (KDRRGGRMLKHKRQRDDGEGRNEAGPSGDRRPANFWP) is disordered. An Asymmetric dimethylarginine; by PRMT1 modification is found at arginine 260. The segment at 262-594 (GRMLKHKRQR…GEAEGFPNTI (333 aa)) is interaction with AKAP13. The segment at 264-594 (MLKHKRQRDD…GEAEGFPNTI (331 aa)) is self-association. Over residues 270-288 (QRDDGEGRNEAGPSGDRRP) the composition is skewed to basic and acidic residues. Residues 311-546 (TAEQMISALL…DLLLEMLDAH (236 aa)) enclose the NR LBD domain. Positions 311-594 (TAEQMISALL…GEAEGFPNTI (284 aa)) are transactivation AF-2. Residues glutamate 353 and arginine 394 each coordinate 17beta-estradiol. Cysteine 447 carries the S-palmitoyl cysteine lipid modification. Histidine 523 lines the 17beta-estradiol pocket. Position 536 is a phosphotyrosine; by Tyr-kinases (tyrosine 536). Residues 551–575 (PANHGGAPMEETNQSQLATTGSTSP) are disordered. The segment covering 561-575 (ETNQSQLATTGSTSP) has biased composition (polar residues). O-linked (GlcNAc) threonine glycosylation occurs at threonine 570.

The protein belongs to the nuclear hormone receptor family. NR3 subfamily. In terms of assembly, binds DNA as a homodimer. Can form a heterodimer with ESR2. Interacts with coactivator NCOA5. Interacts with PELP1, the interaction is enhanced by 17-beta-estradiol; the interaction increases ESR1 transcriptional activity. Interacts with NCOA7; the interaction is ligand-inducible. Interacts with AKAP13, CUEDC2, HEXIM1, KDM5A, MAP1S, SMARD1, and UBE1C. Interacts with MUC1; the interaction is stimulated by 7 beta-estradiol (E2) and enhances ESR1-mediated transcription. Interacts with DNTTIP2, and UIMC1. Interacts with KMT2D/MLL2. Interacts with ATAD2; the interaction is enhanced by estradiol. Interacts with KIF18A and LDB1. Interacts with RLIM (via its C-terminus). Interacts with MACROD1. Interacts with SH2D4A and PLCG. Interacts with SH2D4A; the interaction blocks binding to PLCG and inhibits estrogen-induced cell proliferation. Interacts with DYNLL1. Interacts with CCDC62; the interaction requires estradiol and appears to enhance the transcription of target genes. Interacts with NR2C1; the interaction prevents homodimerization of ESR1 and suppresses its transcriptional activity and cell growth. Interacts with DNAAF4. Interacts with PRMT2. Interacts with RBFOX2. Interacts with EP300; the interaction is estrogen-dependent and enhanced by CITED1. Interacts with CITED1; the interaction is estrogen-dependent. Interacts with FAM120B, FOXL2, PHB2 and SLC30A9. Interacts with coactivators NCOA3 and NCOA6. Interacts with STK3/MST2 only in the presence of SAV1 and vice-versa. Binds to CSNK1D. Interacts with NCOA2; NCOA2 can interact with ESR1 AF-1 and AF-2 domains simultaneously and mediate their transcriptional synergy. Interacts with DDX5. Interacts with NCOA1; the interaction seems to require a self-association of N-terminal and C-terminal regions. Interacts with ZNF366, DDX17, NFKB1, RELA, SP1 and SP3. Interacts with NRIP1. Interacts with GPER1; the interaction occurs in an estrogen-dependent manner. Interacts with CLOCK and the interaction is stimulated by estrogen. Interacts with TRIP4 (ufmylated); estrogen dependent. Interacts with LMTK3; the interaction phosphorylates ESR1 (in vitro) and protects it against proteasomal degradation. Interacts with CCAR2 (via N-terminus) in a ligand-independent manner. Interacts with ZFHX3. Interacts with SFR1 in a ligand-dependent and -independent manner. Interacts with DCAF13, LATS1 and DCAF1; regulates ESR1 ubiquitination and ubiquitin-mediated proteasomal degradation. Interacts (via DNA-binding domain) with POU4F2 (C-terminus); this interaction increases the estrogen receptor ESR1 transcriptional activity in a DNA- and ligand 17-beta-estradiol-independent manner. Interacts with ESRRB isoform 1. Interacts with UBE3A and WBP2. Interacts with GTF2B. Interacts with RBM39. In the absence of hormonal ligand, interacts with TACC1. Interacts with PI3KR1 or PI3KR2 and PTK2/FAK1. Interacts with SRC. Interacts with BAG1; the interaction is promoted in the absence of estradiol (17-beta-estradiol/E2). Interacts with and ubiquitinated by STUB1; the interaction is promoted in the absence of estradiol (17-beta-estradiol/E2). Interacts with NEDD8. Ubiquitinated; regulated by LATS1 via DCAF1 it leads to ESR1 proteasomal degradation. Deubiquitinated by OTUB1. Ubiquitinated by STUB1/CHIP; in the CA1 hippocampal region following loss of endogenous circulating estradiol (17-beta-estradiol/E2). Ubiquitinated by UBR5, leading to its degradation: UBR5 specifically recognizes and binds ligand-bound ESR1 when it is not associated with coactivators (NCOAs). In presence of NCOAs, the UBR5-degron is not accessible, preventing its ubiquitination and degradation. In terms of processing, phosphorylated by cyclin A/CDK2 and CK1. Phosphorylation probably enhances transcriptional activity. Dephosphorylation at Ser-118 by PPP5C inhibits its transactivation activity. Phosphorylated by LMTK3 (in vitro). Post-translationally, palmitoylated at Cys-447 by ZDHHC7 and ZDHHC21. Palmitoylation is required for plasma membrane targeting and for rapid intracellular signaling via ERK and AKT kinases and cAMP generation, but not for signaling mediated by the nuclear hormone receptor. Dimethylated by PRMT1 at Arg-260. The methylation may favor cytoplasmic localization. Demethylated by JMJD6 at Arg-260.

The protein localises to the nucleus. Its subcellular location is the cytoplasm. The protein resides in the golgi apparatus. It is found in the cell membrane. In terms of biological role, nuclear hormone receptor. The steroid hormones and their receptors are involved in the regulation of eukaryotic gene expression and affect cellular proliferation and differentiation in target tissues. Ligand-dependent nuclear transactivation involves either direct homodimer binding to a palindromic estrogen response element (ERE) sequence or association with other DNA-binding transcription factors, such as AP-1/c-Jun, c-Fos, ATF-2, Sp1 and Sp3, to mediate ERE-independent signaling. Ligand binding induces a conformational change allowing subsequent or combinatorial association with multiprotein coactivator complexes through LXXLL motifs of their respective components. Mutual transrepression occurs between the estrogen receptor (ER) and NF-kappa-B in a cell-type specific manner. Decreases NF-kappa-B DNA-binding activity and inhibits NF-kappa-B-mediated transcription from the IL6 promoter and displace RELA/p65 and associated coregulators from the promoter. Recruited to the NF-kappa-B response element of the CCL2 and IL8 promoters and can displace CREBBP. Present with NF-kappa-B components RELA/p65 and NFKB1/p50 on ERE sequences. Can also act synergistically with NF-kappa-B to activate transcription involving respective recruitment adjacent response elements; the function involves CREBBP. Can activate the transcriptional activity of TFF1. Also mediates membrane-initiated estrogen signaling involving various kinase cascades. Essential for MTA1-mediated transcriptional regulation of BRCA1 and BCAS3. Maintains neuronal survival in response to ischemic reperfusion injury when in the presence of circulating estradiol (17-beta-estradiol/E2). The chain is Estrogen receptor (ESR1) from Equus caballus (Horse).